The primary structure comprises 129 residues: Follitropin subunit beta (129 aa).

Residues M1–C18 form the signal peptide. 6 disulfides stabilise this stretch: C21–C69, C35–C84, C38–C122, C46–C100, C50–C102, and C105–C112. 2 N-linked (GlcNAc...) asparagine glycosylation sites follow: N25 and N42.

The protein belongs to the glycoprotein hormones subunit beta family. As to quaternary structure, heterodimer. The active follitropin is a heterodimer composed of an alpha chain/CGA shared with other hormones and a unique beta chain/FSHB shown here.

It localises to the secreted. Functionally, together with the alpha chain CGA constitutes follitropin, the follicle-stimulating hormone, and provides its biological specificity to the hormone heterodimer. Binds FSHR, a G protein-coupled receptor, on target cells to activate downstream signaling pathways. Follitropin is involved in follicle development and spermatogenesis in reproductive organs. The chain is Follitropin subunit beta (FSHB) from Cervus nippon (Sika deer).